We begin with the raw amino-acid sequence, 349 residues long: Glycerol-3-phosphate dehydrogenase [NAD(+)], cytoplasmic (349 aa).

Glycine 10 to glycine 15 serves as a coordination point for NAD(+). Lysine 120 lines the substrate pocket. Alanine 153 lines the NAD(+) pocket. Position 154 is a phosphoserine (serine 154). Lysine 204 serves as the catalytic Proton acceptor. Arginine 269 is an NAD(+) binding site. Arginine 269–asparagine 270 is a binding site for substrate. Residue lysine 289 is modified to N6-succinyllysine. Positions 296 and 298 each coordinate NAD(+). Tyrosine 326 bears the Phosphotyrosine mark.

It belongs to the NAD-dependent glycerol-3-phosphate dehydrogenase family. As to quaternary structure, homodimer.

It is found in the cytoplasm. It carries out the reaction sn-glycerol 3-phosphate + NAD(+) = dihydroxyacetone phosphate + NADH + H(+). Functionally, has glycerol-3-phosphate dehydrogenase activity. This chain is Glycerol-3-phosphate dehydrogenase [NAD(+)], cytoplasmic, found in Mus musculus (Mouse).